A 327-amino-acid chain; its full sequence is Phenylalanine--tRNA ligase alpha subunit (327 aa).

Glu-252 provides a ligand contact to Mg(2+).

It belongs to the class-II aminoacyl-tRNA synthetase family. Phe-tRNA synthetase alpha subunit type 1 subfamily. In terms of assembly, tetramer of two alpha and two beta subunits. Mg(2+) is required as a cofactor.

It is found in the cytoplasm. The enzyme catalyses tRNA(Phe) + L-phenylalanine + ATP = L-phenylalanyl-tRNA(Phe) + AMP + diphosphate + H(+). The protein is Phenylalanine--tRNA ligase alpha subunit of Erwinia tasmaniensis (strain DSM 17950 / CFBP 7177 / CIP 109463 / NCPPB 4357 / Et1/99).